A 71-amino-acid chain; its full sequence is Prophage lysis protein S homolog EssD (71 aa).

This sequence belongs to the lambda phage S protein family.

The polypeptide is Prophage lysis protein S homolog EssD (essD) (Escherichia coli (strain K12)).